Here is a 336-residue protein sequence, read N- to C-terminus: Mitochondrial fission regulator 2 (336 aa).

Residues 139 to 166 (QPDALLKISALEEELQRLRAQIATIITA) adopt a coiled-coil conformation. The disordered stretch occupies residues 296–336 (HRQRDDSFGKENHSAEPSPFSSPDTPRIFQHTRRSQGRIHL). The span at 297-309 (RQRDDSFGKENHS) shows a compositional bias: basic and acidic residues. Residues 325 to 336 (QHTRRSQGRIHL) show a composition bias toward basic residues.

This sequence belongs to the MTFR1 family.

The protein resides in the mitochondrion. Its function is as follows. May play a role in mitochondrial aerobic respiration. Can also promote mitochondrial fission. The chain is Mitochondrial fission regulator 2 (mtfr2) from Danio rerio (Zebrafish).